We begin with the raw amino-acid sequence, 153 residues long: Aspartate carbamoyltransferase regulatory chain (153 aa).

The Zn(2+) site is built by Cys109, Cys114, Cys138, and Cys141.

It belongs to the PyrI family. As to quaternary structure, contains catalytic and regulatory chains. It depends on Zn(2+) as a cofactor.

In terms of biological role, involved in allosteric regulation of aspartate carbamoyltransferase. In Edwardsiella ictaluri (strain 93-146), this protein is Aspartate carbamoyltransferase regulatory chain.